Here is a 155-residue protein sequence, read N- to C-terminus: Transcriptional repressor NrdR (155 aa).

A zinc finger lies at 3–34 (CPFCAANDTKVIDSRLVAEGDQVRRRRECVAC). Positions 49–139 (PRLIKQDGSR…VYRRFQDLNE (91 aa)) constitute an ATP-cone domain.

This sequence belongs to the NrdR family. Zn(2+) serves as cofactor.

Its function is as follows. Negatively regulates transcription of bacterial ribonucleotide reductase nrd genes and operons by binding to NrdR-boxes. This chain is Transcriptional repressor NrdR, found in Ectopseudomonas mendocina (strain ymp) (Pseudomonas mendocina).